The primary structure comprises 417 residues: Inner membrane transport protein YnfM (417 aa).

The disordered stretch occupies residues 1–22 (MSRTTTVDGAPASDTDKQSISQ). The Periplasmic portion of the chain corresponds to 1–38 (MSRTTTVDGAPASDTDKQSISQPNQFIKRGTPQFMRVT). The helical transmembrane segment at 39-59 (LALFSAGLATFALLYCVQPIL) threads the bilayer. Residues 60-73 (PVLSQEFGLTPANS) lie on the Cytoplasmic side of the membrane. Residues 74–94 (SISLSISTAMLAIGLLFTGPL) form a helical membrane-spanning segment. The Periplasmic segment spans residues 95-101 (SDAIGRK). A helical transmembrane segment spans residues 102-122 (PVMVTALLLASICTLLSTMMT). Residues 123–125 (SWH) lie on the Cytoplasmic side of the membrane. The chain crosses the membrane as a helical span at residues 126–146 (GILIMRALIGLSLSGVAAVGM). Residues 147-152 (TYLSEE) are Periplasmic-facing. A helical transmembrane segment spans residues 153–173 (IHPSFVAFSMGLYISGNSIGG). Residues 174–190 (MSGRLISGVFTDFFNWR) are Cytoplasmic-facing. The chain crosses the membrane as a helical span at residues 191-211 (IALAAIGCFALASALMFWKIL). Topologically, residues 212 to 241 (PESRHFRPTSLRPKTLFINFRLHWRDRGLP) are periplasmic. The chain crosses the membrane as a helical span at residues 242–262 (LLFAEGFLLMGSFVTLFNYIG). The Cytoplasmic portion of the chain corresponds to 263–264 (YR). A helical transmembrane segment spans residues 265-285 (LMLSPWHVSQAVVGLLSLAYL). Residues 286 to 315 (TGTWSSPKAGTMTTRYGRGPVMLFSTGVML) lie on the Periplasmic side of the membrane. The chain crosses the membrane as a helical span at residues 316-336 (FGLLMTLFSSLWLIFAGMLLF). Topologically, residues 337 to 364 (SAGFFAAHSVASSWIGPRAKRAKGQASS) are cytoplasmic. A helical transmembrane segment spans residues 365 to 385 (LYLFSYYLGSSIAGTLGGVFW). Residues 386–387 (HN) are Periplasmic-facing. The chain crosses the membrane as a helical span at residues 388–408 (YGWNGVGAFIALMLVIALLVG). Residues 409–417 (TRLHRRLHA) are Cytoplasmic-facing.

The protein belongs to the major facilitator superfamily.

The protein localises to the cell inner membrane. The protein is Inner membrane transport protein YnfM (ynfM) of Escherichia coli (strain K12).